Reading from the N-terminus, the 96-residue chain is Molybdopterin synthase sulfur carrier subunit (96 aa).

A 1-thioglycine; alternate modification is found at Gly-96. Gly-96 carries the glycyl adenylate; alternate modification.

Belongs to the MoaD family. MOCS2A subfamily. In terms of assembly, heterotetramer; composed of 2 small (MOCS2A) and 2 large (MOCS2B) subunits. Post-translationally, C-terminal thiocarboxylation occurs in 2 steps, it is first acyl-adenylated (-COAMP) via the hesA/moeB/thiF part of MOCS3, then thiocarboxylated (-COSH) via the rhodanese domain of MOCS3.

Its subcellular location is the cytoplasm. It functions in the pathway cofactor biosynthesis; molybdopterin biosynthesis. In terms of biological role, acts as a sulfur carrier required for molybdopterin biosynthesis. Component of the molybdopterin synthase complex that catalyzes the conversion of precursor Z into molybdopterin by mediating the incorporation of 2 sulfur atoms into precursor Z to generate a dithiolene group. In the complex, serves as sulfur donor by being thiocarboxylated (-COSH) at its C-terminus by MOCS3. After interaction with MOCS2B, the sulfur is then transferred to precursor Z to form molybdopterin. This Arabidopsis thaliana (Mouse-ear cress) protein is Molybdopterin synthase sulfur carrier subunit.